A 203-amino-acid chain; its full sequence is Mediator of RNA polymerase II transcription subunit 22 (203 aa).

A coiled-coil region spans residues 93–123; that stretch reads SVNEAINQRNQQLRSLQEECDKKLIALRDEI. Residues 164-188 show a composition bias toward polar residues; sequence ESLSMPLTTATAEQSIATSQSSTPS. Residues 164 to 203 are disordered; the sequence is ESLSMPLTTATAEQSIATSQSSTPSHPHVNGHGAGPTDHS.

It belongs to the Mediator complex subunit 22 family. As to quaternary structure, component of the Mediator complex.

The protein resides in the nucleus. Its function is as follows. Component of the Mediator complex, a coactivator involved in the regulated transcription of nearly all RNA polymerase II-dependent genes. Mediator functions as a bridge to convey information from gene-specific regulatory proteins to the basal RNA polymerase II transcription machinery. Mediator is recruited to promoters by direct interactions with regulatory proteins and serves as a scaffold for the assembly of a functional preinitiation complex with RNA polymerase II and the general transcription factors. This chain is Mediator of RNA polymerase II transcription subunit 22 (MED22), found in Gallus gallus (Chicken).